The sequence spans 430 residues: Putative cytochrome P450 139 (430 aa).

Cys372 is a heme binding site.

It belongs to the cytochrome P450 family. Heme serves as cofactor.

The chain is Putative cytochrome P450 139 (cyp139) from Mycobacterium bovis (strain ATCC BAA-935 / AF2122/97).